Consider the following 230-residue polypeptide: Ion-translocating oxidoreductase complex subunit E (230 aa).

6 helical membrane passes run 18-38 (ALVQ…ATNA), 39-59 (LGLG…ISTL), 63-83 (TPTE…VSAV), 86-106 (LINA…PLIV), 128-148 (ALDG…LGAM), and 182-202 (PFLL…MLAG).

Belongs to the NqrDE/RnfAE family. The complex is composed of six subunits: RsxA, RsxB, RsxC, RsxD, RsxE and RsxG.

It localises to the cell inner membrane. Part of a membrane-bound complex that couples electron transfer with translocation of ions across the membrane. Required to maintain the reduced state of SoxR. The polypeptide is Ion-translocating oxidoreductase complex subunit E (Escherichia fergusonii (strain ATCC 35469 / DSM 13698 / CCUG 18766 / IAM 14443 / JCM 21226 / LMG 7866 / NBRC 102419 / NCTC 12128 / CDC 0568-73)).